The primary structure comprises 430 residues: Tyrosine--tRNA ligase (430 aa).

An L-tyrosine-binding site is contributed by Tyr32. Residues 37–46 (PTADSLHIGH) carry the 'HIGH' region motif. L-tyrosine contacts are provided by Tyr172 and Gln176. The 'KMSKS' region signature appears at 232 to 236 (KFGKT). Lys235 is an ATP binding site. The 69-residue stretch at 362–430 (ISLVDLLADA…KKSYYLIIVE (69 aa)) folds into the S4 RNA-binding domain.

It belongs to the class-I aminoacyl-tRNA synthetase family. TyrS type 1 subfamily. Homodimer.

The protein localises to the cytoplasm. It catalyses the reaction tRNA(Tyr) + L-tyrosine + ATP = L-tyrosyl-tRNA(Tyr) + AMP + diphosphate + H(+). In terms of biological role, catalyzes the attachment of tyrosine to tRNA(Tyr) in a two-step reaction: tyrosine is first activated by ATP to form Tyr-AMP and then transferred to the acceptor end of tRNA(Tyr). The protein is Tyrosine--tRNA ligase of Porphyromonas gingivalis (strain ATCC BAA-308 / W83).